The following is a 640-amino-acid chain: Threonine--tRNA ligase (640 aa).

The 60-residue stretch at 1–60 (MKITFPDGAVKEFEPGVSTADIAASISPGLKKKALAGKLNGELLDLVTPIHEDGAIEIVT) folds into the TGS domain. Positions 241–538 (DHRKLGKELE…LIEEYKGAFP (298 aa)) are catalytic. C334, H385, and H515 together coordinate Zn(2+).

The protein belongs to the class-II aminoacyl-tRNA synthetase family. In terms of assembly, homodimer. It depends on Zn(2+) as a cofactor.

The protein resides in the cytoplasm. It catalyses the reaction tRNA(Thr) + L-threonine + ATP = L-threonyl-tRNA(Thr) + AMP + diphosphate + H(+). Catalyzes the attachment of threonine to tRNA(Thr) in a two-step reaction: L-threonine is first activated by ATP to form Thr-AMP and then transferred to the acceptor end of tRNA(Thr). Also edits incorrectly charged L-seryl-tRNA(Thr). This is Threonine--tRNA ligase from Listeria welshimeri serovar 6b (strain ATCC 35897 / DSM 20650 / CCUG 15529 / CIP 8149 / NCTC 11857 / SLCC 5334 / V8).